Here is a 280-residue protein sequence, read N- to C-terminus: Inhibitor of growth protein 2 (280 aa).

Residues 48-120 adopt a coiled-coil conformation; the sequence is VLRELDNKYQ…VENRARQMEL (73 aa). The disordered stretch occupies residues 122 to 204; it reads SQCFQDPAES…KQEREASPVE (83 aa). Residues 130 to 140 show a composition bias toward basic and acidic residues; sequence ESERASDKAKM. A compositionally biased stretch (basic residues) spans 181–193; the sequence is KKSKSAKKKKRSK. K195 participates in a covalent cross-link: Glycyl lysine isopeptide (Lys-Gly) (interchain with G-Cter in SUMO1). Residues 212 to 261 form a PHD-type zinc finger; that stretch reads PTYCLCNQVSYGEMIGCDNEQCPIEWFHFSCVSLTYKPKGKWYCPKCRGD. C215, C217, C228, C233, H239, C242, C255, and C258 together coordinate Zn(2+). A compositionally biased stretch (basic and acidic residues) spans 258–274; it reads CRGDNEKTMDKSTEKTK. Residues 258–280 are disordered; the sequence is CRGDNEKTMDKSTEKTKKDRRSR. The interval 264–280 is PBR; it reads KTMDKSTEKTKKDRRSR.

Belongs to the ING family. As to quaternary structure, interacts with H3K4me3 and to a lesser extent with H3K4me2. Component of a mSin3A-like complex at least consisting of SIN3A, HDAC1, HDAC2, RBBP4/RbAp48, RBBP7/RbAp46, SAP30 and ING2. In terms of processing, sumoylation enhances its association with SIN3A and is required for binding to some target gene promoters, this is the case for TMEM71. As to expression, widely expressed. Higher expressed in colon-cancer tumor than in normal colon tissues.

It is found in the nucleus. Its function is as follows. Seems to be involved in p53/TP53 activation and p53/TP53-dependent apoptotic pathways, probably by enhancing acetylation of p53/TP53. Component of a mSin3A-like corepressor complex, which is probably involved in deacetylation of nucleosomal histones. ING2 activity seems to be modulated by binding to phosphoinositides (PtdInsPs). This is Inhibitor of growth protein 2 (ING2) from Homo sapiens (Human).